The primary structure comprises 473 residues: MMKGLIGYRFSPTGEEVINHYLKNKLLGKYWLVDEAISEINILSHKPSKDLPKLARIQSEDLEWYFFSPIEYTNPNKMKMKRTTGSGFWKPTGVDREIRDKRGNGVVIGIKKTLVYHEGKSPHGVRTPWVMHEYHITCLPHHKRKYVVCQVKYKGEAAEISYEPSPSLVSDSHTVIAITGEPEPELQVEQPGKENLLGMSVDDLIEPMNQQEEPQGPHLAPNDDEFIRGLRHVDRGTVEYLFANEENMDGLSMNDLRIPMIVQQEDLSEWEGFNADTFFSDNNNNYNLNVHHQLTPYGDGYLNAFSGYNEGNPPDHELVMQENRNDHMPRKPVTGTIDYSSDSGSDAGSISTTSYQGTSSPNISVGSSSRHLSSCSSTDSCKDLQTCTDPSIISREIRELTQEVKQEIPRAVDAPMNNESSLVKTEKKGLFIVEDAMERNRKKPRFIYLMKMIIGNIISVLLPVKRLIPVKKL.

Residues 4 to 154 (GLIGYRFSPT…KYVVCQVKYK (151 aa)) form the NAC domain. A DNA-binding region spans residues 108–160 (IGIKKTLVYHEGKSPHGVRTPWVMHEYHITCLPHHKRKYVVCQVKYKGEAAEI). Positions 326-380 (DHMPRKPVTGTIDYSSDSGSDAGSISTTSYQGTSSPNISVGSSSRHLSSCSSTDS) are disordered. Low complexity-rich tracts occupy residues 340 to 354 (SSDS…STTS) and 364 to 379 (SVGS…SSTD). Residues 446–468 (FIYLMKMIIGNIISVLLPVKRLI) traverse the membrane as a helical segment.

It is found in the membrane. It localises to the nucleus. Its function is as follows. Transcription activator activated by proteolytic cleavage through regulated intramembrane proteolysis (RIP) mediated by calpain or its functional homolog. Regulates cytokinin signaling during cell division. The chain is NAC domain-containing protein 68 (NAC68) from Arabidopsis thaliana (Mouse-ear cress).